The primary structure comprises 249 residues: uncharacterized protein (249 aa).

This is an uncharacterized protein from Caenorhabditis elegans.